Consider the following 428-residue polypeptide: 4-hydroxy-3-methylbut-2-en-1-yl diphosphate synthase (flavodoxin) (428 aa).

Residues Cys315, Cys318, Cys361, and Glu368 each coordinate [4Fe-4S] cluster.

The protein belongs to the IspG family. Requires [4Fe-4S] cluster as cofactor.

The enzyme catalyses (2E)-4-hydroxy-3-methylbut-2-enyl diphosphate + oxidized [flavodoxin] + H2O + 2 H(+) = 2-C-methyl-D-erythritol 2,4-cyclic diphosphate + reduced [flavodoxin]. Its pathway is isoprenoid biosynthesis; isopentenyl diphosphate biosynthesis via DXP pathway; isopentenyl diphosphate from 1-deoxy-D-xylulose 5-phosphate: step 5/6. Its function is as follows. Converts 2C-methyl-D-erythritol 2,4-cyclodiphosphate (ME-2,4cPP) into 1-hydroxy-2-methyl-2-(E)-butenyl 4-diphosphate. This Ralstonia pickettii (strain 12J) protein is 4-hydroxy-3-methylbut-2-en-1-yl diphosphate synthase (flavodoxin).